Here is a 437-residue protein sequence, read N- to C-terminus: GTPase Obg (437 aa).

One can recognise an Obg domain in the interval 2 to 160 (SMFLDTAKIS…RQLELELKIL (159 aa)). The OBG-type G domain maps to 161 to 338 (ADVGLVGFPS…LLEATAELLA (178 aa)). Residues 167–174 (GFPSVGKS), 192–196 (FTTIV), 214–217 (DLPG), 284–287 (NKMD), and 319–321 (SSL) contribute to the GTP site. Residues Ser174 and Thr194 each contribute to the Mg(2+) site. The OCT domain occupies 359–437 (GFAETEKDFE…IGKFEFEFVD (79 aa)).

Belongs to the TRAFAC class OBG-HflX-like GTPase superfamily. OBG GTPase family. In terms of assembly, monomer. Requires Mg(2+) as cofactor.

The protein localises to the cytoplasm. In terms of biological role, an essential GTPase which binds GTP, GDP and possibly (p)ppGpp with moderate affinity, with high nucleotide exchange rates and a fairly low GTP hydrolysis rate. Plays a role in control of the cell cycle, stress response, ribosome biogenesis and in those bacteria that undergo differentiation, in morphogenesis control. In Streptococcus pyogenes serotype M4 (strain MGAS10750), this protein is GTPase Obg.